The primary structure comprises 243 residues: 1-(5-phosphoribosyl)-5-[(5-phosphoribosylamino)methylideneamino] imidazole-4-carboxamide isomerase (243 aa).

D8 functions as the Proton acceptor in the catalytic mechanism. D128 (proton donor) is an active-site residue.

It belongs to the HisA/HisF family.

The protein resides in the cytoplasm. The catalysed reaction is 1-(5-phospho-beta-D-ribosyl)-5-[(5-phospho-beta-D-ribosylamino)methylideneamino]imidazole-4-carboxamide = 5-[(5-phospho-1-deoxy-D-ribulos-1-ylimino)methylamino]-1-(5-phospho-beta-D-ribosyl)imidazole-4-carboxamide. It participates in amino-acid biosynthesis; L-histidine biosynthesis; L-histidine from 5-phospho-alpha-D-ribose 1-diphosphate: step 4/9. The sequence is that of 1-(5-phosphoribosyl)-5-[(5-phosphoribosylamino)methylideneamino] imidazole-4-carboxamide isomerase from Opitutus terrae (strain DSM 11246 / JCM 15787 / PB90-1).